Consider the following 227-residue polypeptide: MAYPFQMGLQDATSPIMEELLHFHDHTLMIVFLISSLVLYIISLMLTTKLTHTSTMDAQEVETIWTILPAIILILIALPSLRILYMMDEINNPSLTVKTMGHQWYWSYEYTDYEDLSFDSYMIPTQELKPGELRLLEVDNRVVLPMELTIRMLISSEDVLHSWAVPSLGLKTDAIPGRLNQTTLMAMRPGLYYGQCSEICGSNHSFMPIVLELVPLSHFEKWSASLL.

Residues 1-14 (MAYPFQMGLQDATS) lie on the Mitochondrial intermembrane side of the membrane. The helical transmembrane segment at 15 to 45 (PIMEELLHFHDHTLMIVFLISSLVLYIISLM) threads the bilayer. Over 46–59 (LTTKLTHTSTMDAQ) the chain is Mitochondrial matrix. A helical transmembrane segment spans residues 60 to 87 (EVETIWTILPAIILILIALPSLRILYMM). Topologically, residues 88 to 227 (DEINNPSLTV…HFEKWSASLL (140 aa)) are mitochondrial intermembrane. Residues His-161, Cys-196, Glu-198, Cys-200, His-204, and Met-207 each contribute to the Cu cation site. Residue Glu-198 coordinates Mg(2+).

This sequence belongs to the cytochrome c oxidase subunit 2 family. In terms of assembly, component of the cytochrome c oxidase (complex IV, CIV), a multisubunit enzyme composed of 14 subunits. The complex is composed of a catalytic core of 3 subunits MT-CO1, MT-CO2 and MT-CO3, encoded in the mitochondrial DNA, and 11 supernumerary subunits COX4I, COX5A, COX5B, COX6A, COX6B, COX6C, COX7A, COX7B, COX7C, COX8 and NDUFA4, which are encoded in the nuclear genome. The complex exists as a monomer or a dimer and forms supercomplexes (SCs) in the inner mitochondrial membrane with NADH-ubiquinone oxidoreductase (complex I, CI) and ubiquinol-cytochrome c oxidoreductase (cytochrome b-c1 complex, complex III, CIII), resulting in different assemblies (supercomplex SCI(1)III(2)IV(1) and megacomplex MCI(2)III(2)IV(2)). Found in a complex with TMEM177, COA6, COX18, COX20, SCO1 and SCO2. Interacts with TMEM177 in a COX20-dependent manner. Interacts with COX20. Interacts with COX16. Requires Cu cation as cofactor.

The protein resides in the mitochondrion inner membrane. The enzyme catalyses 4 Fe(II)-[cytochrome c] + O2 + 8 H(+)(in) = 4 Fe(III)-[cytochrome c] + 2 H2O + 4 H(+)(out). Its function is as follows. Component of the cytochrome c oxidase, the last enzyme in the mitochondrial electron transport chain which drives oxidative phosphorylation. The respiratory chain contains 3 multisubunit complexes succinate dehydrogenase (complex II, CII), ubiquinol-cytochrome c oxidoreductase (cytochrome b-c1 complex, complex III, CIII) and cytochrome c oxidase (complex IV, CIV), that cooperate to transfer electrons derived from NADH and succinate to molecular oxygen, creating an electrochemical gradient over the inner membrane that drives transmembrane transport and the ATP synthase. Cytochrome c oxidase is the component of the respiratory chain that catalyzes the reduction of oxygen to water. Electrons originating from reduced cytochrome c in the intermembrane space (IMS) are transferred via the dinuclear copper A center (CU(A)) of subunit 2 and heme A of subunit 1 to the active site in subunit 1, a binuclear center (BNC) formed by heme A3 and copper B (CU(B)). The BNC reduces molecular oxygen to 2 water molecules using 4 electrons from cytochrome c in the IMS and 4 protons from the mitochondrial matrix. The polypeptide is Cytochrome c oxidase subunit 2 (MT-CO2) (Ailurus fulgens (Himalayan red panda)).